A 313-amino-acid polypeptide reads, in one-letter code: Meiotically up-regulated gene 100 protein, mitochondrial (313 aa).

Helical transmembrane passes span 147–167 and 178–198; these read VFDY…YTAG and SGFI…TLTF.

Its subcellular location is the mitochondrion inner membrane. Its function is as follows. Has a role in meiosis. This chain is Meiotically up-regulated gene 100 protein, mitochondrial (mug100), found in Schizosaccharomyces pombe (strain 972 / ATCC 24843) (Fission yeast).